Consider the following 167-residue polypeptide: Fluoride-specific ion channel FluC (167 aa).

4 helical membrane-spanning segments follow: residues H32–A52, I69–V89, F102–F122, and L137–L157. Na(+) is bound by residues G109 and S112.

The protein belongs to the fluoride channel Fluc/FEX (TC 1.A.43) family.

The protein localises to the cell inner membrane. The enzyme catalyses fluoride(in) = fluoride(out). With respect to regulation, na(+) is not transported, but it plays an essential structural role and its presence is essential for fluoride channel function. In terms of biological role, fluoride-specific ion channel. Important for reducing fluoride concentration in the cell, thus reducing its toxicity. This chain is Fluoride-specific ion channel FluC, found in Xanthomonas oryzae pv. oryzae (strain KACC10331 / KXO85).